Reading from the N-terminus, the 721-residue chain is Zinc-transporting ATPase (721 aa).

At 1–107 (MTQSSPLKTQ…HSHGAGEFNL (107 aa)) the chain is on the cytoplasmic side. Positions 8–74 (KTQQMQVGGM…RIAALGYTLA (67 aa)) constitute an HMA domain. Zn(2+)-binding residues include C19 and C22. Residues 80–101 (VTLNGHKHPHSHREEGHSHSHG) form a disordered region. The helical transmembrane segment at 108-128 (KQELLPVLTAIALFTIAILFE) threads the bilayer. Over 129–140 (QPLHNTPGQIAE) the chain is Extracellular. A helical membrane pass occupies residues 141–160 (FAVIIPAYLLSGWTVLKTAG). Over 161 to 167 (RNILRGQ) the chain is Cytoplasmic. A helical membrane pass occupies residues 168–187 (IFDENFLMTIATLGALAIHQ). Topologically, residues 188–190 (LPE) are extracellular. Residues 191–210 (AVAVMLFFRVGELFQEYSVG) traverse the membrane as a helical segment. Over 211–344 (RSRRSIKALL…ITQFARYYTP (134 aa)) the chain is Cytoplasmic. The helical transmembrane segment at 345 to 363 (VIVFLSLAVALLPPLFIPG) threads the bilayer. Residues 364 to 369 (ADRADW) are Extracellular-facing. Residues 370–387 (VYRALVLLVISCPCGLVI) traverse the membrane as a helical segment. Over 388-671 (SIPLGYFGGI…AIHVARKTRQ (284 aa)) the chain is Cytoplasmic. D425 (4-aspartylphosphate intermediate) is an active-site residue. Mg(2+)-binding residues include D618 and D622. A helical transmembrane segment spans residues 672 to 693 (IVVQNIVLALGIKALFIALGTI). Over 694–701 (GLATLWEA) the chain is Extracellular. Residues 702 to 717 (VFADVGVALLAILNAT) form a helical membrane-spanning segment. The Cytoplasmic portion of the chain corresponds to 718–721 (RIAK).

The protein belongs to the cation transport ATPase (P-type) (TC 3.A.3) family. Type IB subfamily.

It is found in the cell membrane. The enzyme catalyses Zn(2+)(in) + ATP + H2O = Zn(2+)(out) + ADP + phosphate + H(+). This Synechocystis sp. (strain ATCC 27184 / PCC 6803 / Kazusa) protein is Zinc-transporting ATPase (ziaA).